A 174-amino-acid polypeptide reads, in one-letter code: Co-chaperone protein HscB homolog (174 aa).

The region spanning N2–L74 is the J domain.

This sequence belongs to the HscB family. In terms of assembly, interacts with HscA and stimulates its ATPase activity.

Its function is as follows. Co-chaperone involved in the maturation of iron-sulfur cluster-containing proteins. Seems to help targeting proteins to be folded toward HscA. This Shewanella halifaxensis (strain HAW-EB4) protein is Co-chaperone protein HscB homolog.